A 198-amino-acid polypeptide reads, in one-letter code: Recombination protein RecR (198 aa).

The segment at 57–72 (CSICGNLTDDDPCHIC) adopts a C4-type zinc-finger fold. Residues 80–175 (TTILVVEDAK…KVTRLARGLA (96 aa)) form the Toprim domain.

The protein belongs to the RecR family.

Its function is as follows. May play a role in DNA repair. It seems to be involved in an RecBC-independent recombinational process of DNA repair. It may act with RecF and RecO. The sequence is that of Recombination protein RecR from Streptococcus pyogenes serotype M1.